Reading from the N-terminus, the 195-residue chain is Pyridoxal 5'-phosphate synthase subunit PdxT (195 aa).

46-48 (GES) is a binding site for L-glutamine. The Nucleophile role is filled by C78. L-glutamine contacts are provided by residues R107 and 136–137 (IR). Residues H173 and E175 each act as charge relay system in the active site.

Belongs to the glutaminase PdxT/SNO family. As to quaternary structure, in the presence of PdxS, forms a dodecamer of heterodimers. Only shows activity in the heterodimer.

It carries out the reaction aldehydo-D-ribose 5-phosphate + D-glyceraldehyde 3-phosphate + L-glutamine = pyridoxal 5'-phosphate + L-glutamate + phosphate + 3 H2O + H(+). It catalyses the reaction L-glutamine + H2O = L-glutamate + NH4(+). It functions in the pathway cofactor biosynthesis; pyridoxal 5'-phosphate biosynthesis. Functionally, catalyzes the hydrolysis of glutamine to glutamate and ammonia as part of the biosynthesis of pyridoxal 5'-phosphate. The resulting ammonia molecule is channeled to the active site of PdxS. This chain is Pyridoxal 5'-phosphate synthase subunit PdxT, found in Dehalococcoides mccartyi (strain CBDB1).